The primary structure comprises 325 residues: Glutarate 2-hydroxylase (325 aa).

Fe cation contacts are provided by histidine 160, aspartate 162, and histidine 292.

The protein belongs to the glutarate hydroxylase family. In terms of assembly, homotetramer. Fe(2+) is required as a cofactor.

It catalyses the reaction glutarate + 2-oxoglutarate + O2 = (S)-2-hydroxyglutarate + succinate + CO2. It participates in amino-acid degradation. In terms of biological role, acts as an alpha-ketoglutarate-dependent dioxygenase catalyzing hydroxylation of glutarate (GA) to L-2-hydroxyglutarate (L2HG). Functions in a L-lysine degradation pathway that proceeds via cadaverine, glutarate and L-2-hydroxyglutarate. The chain is Glutarate 2-hydroxylase from Escherichia coli O6:H1 (strain CFT073 / ATCC 700928 / UPEC).